The chain runs to 489 residues: Membrane-bound lytic murein transglycosylase F (489 aa).

The signal sequence occupies residues 1 to 32; sequence MFALTAYRLRCAAWLLATGIFLLLAGCSEAKA. Residues 33-268 form a non-LT domain region; it reads PTALERVQKE…RLKDRYYGHV (236 aa). Positions 269-489 are LT domain; it reads DVLGYVGAYT…PEEDSGDEKL (221 aa). The active site involves E315. The tract at residues 466–489 is disordered; that stretch reads AESGLHLPGVNKTRPEEDSGDEKL. Residues 478–489 show a composition bias toward basic and acidic residues; the sequence is TRPEEDSGDEKL.

It in the N-terminal section; belongs to the bacterial solute-binding protein 3 family. In the C-terminal section; belongs to the transglycosylase Slt family.

Its subcellular location is the cell outer membrane. The enzyme catalyses Exolytic cleavage of the (1-&gt;4)-beta-glycosidic linkage between N-acetylmuramic acid (MurNAc) and N-acetylglucosamine (GlcNAc) residues in peptidoglycan, from either the reducing or the non-reducing ends of the peptidoglycan chains, with concomitant formation of a 1,6-anhydrobond in the MurNAc residue.. In terms of biological role, murein-degrading enzyme that degrades murein glycan strands and insoluble, high-molecular weight murein sacculi, with the concomitant formation of a 1,6-anhydromuramoyl product. Lytic transglycosylases (LTs) play an integral role in the metabolism of the peptidoglycan (PG) sacculus. Their lytic action creates space within the PG sacculus to allow for its expansion as well as for the insertion of various structures such as secretion systems and flagella. The chain is Membrane-bound lytic murein transglycosylase F from Pseudomonas aeruginosa (strain UCBPP-PA14).